A 68-amino-acid chain; its full sequence is Copper transport protein ATOX1 (68 aa).

Residues Met-1–Ser-63 enclose the HMA domain. Cu cation-binding residues include Cys-12 and Cys-15. A Phosphoserine modification is found at Ser-47. Lys-60 carries the post-translational modification N6-acetyllysine.

The protein belongs to the ATX1 family. Homodimer. Interacts with ATP7B. Interacts with ATP7A. Interacts (via dimer form) with SLC31A1 (via C-terminal domain); this interaction improves ATOX1 stability and controls intracellular Cu(I) levels.

Functionally, binds and deliver cytosolic copper to the copper ATPase proteins. May be important in cellular antioxidant defense. The protein is Copper transport protein ATOX1 of Mus musculus (Mouse).